Here is a 276-residue protein sequence, read N- to C-terminus: Large ribosomal subunit protein uL2 (276 aa).

Positions 221 to 276 (RGSVMNPNDHPHGGGEGRAPIGRKAPVTPWGKPTLGLKTRKKKNKSDQYIIRRRKK) are disordered.

Belongs to the universal ribosomal protein uL2 family. As to quaternary structure, part of the 50S ribosomal subunit. Forms a bridge to the 30S subunit in the 70S ribosome.

Functionally, one of the primary rRNA binding proteins. Required for association of the 30S and 50S subunits to form the 70S ribosome, for tRNA binding and peptide bond formation. It has been suggested to have peptidyltransferase activity; this is somewhat controversial. Makes several contacts with the 16S rRNA in the 70S ribosome. This chain is Large ribosomal subunit protein uL2, found in Brevibacillus brevis (strain 47 / JCM 6285 / NBRC 100599).